Consider the following 632-residue polypeptide: tRNA uridine 5-carboxymethylaminomethyl modification enzyme MnmG (632 aa).

FAD contacts are provided by residues 15–20, I127, and S182; that span reads GAGHAG. 276 to 290 lines the NAD(+) pocket; sequence GPRYCPSIEDKIVRF. Residue Q373 participates in FAD binding.

This sequence belongs to the MnmG family. As to quaternary structure, homodimer. Heterotetramer of two MnmE and two MnmG subunits. FAD serves as cofactor.

The protein localises to the cytoplasm. Its function is as follows. NAD-binding protein involved in the addition of a carboxymethylaminomethyl (cmnm) group at the wobble position (U34) of certain tRNAs, forming tRNA-cmnm(5)s(2)U34. This chain is tRNA uridine 5-carboxymethylaminomethyl modification enzyme MnmG, found in Streptococcus pyogenes serotype M12 (strain MGAS2096).